Consider the following 429-residue polypeptide: Enolase (429 aa).

Q162 contributes to the (2R)-2-phosphoglycerate binding site. E204 serves as the catalytic Proton donor. Mg(2+) is bound by residues D242, E289, and D316. 4 residues coordinate (2R)-2-phosphoglycerate: K341, R370, S371, and K392. K341 acts as the Proton acceptor in catalysis.

It belongs to the enolase family. Mg(2+) is required as a cofactor.

It localises to the cytoplasm. The protein localises to the secreted. Its subcellular location is the cell surface. The enzyme catalyses (2R)-2-phosphoglycerate = phosphoenolpyruvate + H2O. It functions in the pathway carbohydrate degradation; glycolysis; pyruvate from D-glyceraldehyde 3-phosphate: step 4/5. Its function is as follows. Catalyzes the reversible conversion of 2-phosphoglycerate (2-PG) into phosphoenolpyruvate (PEP). It is essential for the degradation of carbohydrates via glycolysis. This Flavobacterium psychrophilum (strain ATCC 49511 / DSM 21280 / CIP 103535 / JIP02/86) protein is Enolase.